The chain runs to 840 residues: Recyclin-1 (840 aa).

In terms of domain architecture, F-box spans 1–48; the sequence is MDDLLKVPEIVTNIASYLSTVDYLSFQQVNKRVYAIINGKNDSKYWSL. At S409 the chain carries Phosphoserine.

In terms of assembly, interacts with SKP1.

It is found in the cytoplasm. It localises to the bud neck. Its subcellular location is the cell tip. Its function is as follows. Involved in recycling plasma membrane proteins internalized by endocytosis. Required for recycling of the v-SNARE SNC1. The sequence is that of Recyclin-1 (RCY1) from Saccharomyces cerevisiae (strain ATCC 204508 / S288c) (Baker's yeast).